The following is a 219-amino-acid chain: Large ribosomal subunit protein uL3 (219 aa).

It belongs to the universal ribosomal protein uL3 family. As to quaternary structure, part of the 50S ribosomal subunit. Forms a cluster with proteins L14 and L19.

Functionally, one of the primary rRNA binding proteins, it binds directly near the 3'-end of the 23S rRNA, where it nucleates assembly of the 50S subunit. The polypeptide is Large ribosomal subunit protein uL3 (Chlamydia pneumoniae (Chlamydophila pneumoniae)).